The sequence spans 292 residues: NADH-cytochrome b5 reductase 1 (292 aa).

A helical membrane pass occupies residues Ala12–Gly32. The 106-residue stretch at Thr43–Thr148 folds into the FAD-binding FR-type domain. FAD contacts are provided by residues Thr128–Gly143 and His154–Leu191.

Belongs to the flavoprotein pyridine nucleotide cytochrome reductase family. Monomer. Component of the 2-(3-amino-3-carboxypropyl)histidine synthase complex composed of dph1, dph2, dph3 and a NADH-dependent reductase, predominantly cbr1. FAD is required as a cofactor.

The protein localises to the mitochondrion outer membrane. The enzyme catalyses 2 Fe(III)-[cytochrome b5] + NADH = 2 Fe(II)-[cytochrome b5] + NAD(+) + H(+). It carries out the reaction 2 Fe(3+)-[Dph3] + NADH = 2 Fe(2+)-[Dph3] + NAD(+) + H(+). It participates in protein modification; peptidyl-diphthamide biosynthesis. Functionally, NADH-dependent reductase for dph3 and cytochrome b5. Required for the first step of diphthamide biosynthesis, a post-translational modification of histidine which occurs in elongation factor 2. Dph1 and dph2 transfer a 3-amino-3-carboxypropyl (ACP) group from S-adenosyl-L-methionine (SAM) to a histidine residue, the reaction is assisted by a reduction system comprising dph3 and a NADH-dependent reductase, predominantly cbr1. By reducing dph3, also involved in the formation of the tRNA wobble base modification mcm5s 2U (5-methoxycarbonylmethyl-2-thiouridine), mediated by the elongator complex. The cytochrome b5/NADH cytochrome b5 reductase electron transfer system supports the catalytic activity of several sterol biosynthetic enzymes. The sequence is that of NADH-cytochrome b5 reductase 1 (cbr1) from Aspergillus oryzae (strain ATCC 42149 / RIB 40) (Yellow koji mold).